Reading from the N-terminus, the 540-residue chain is CWF19-like protein 1 (540 aa).

A disordered region spans residues 265–326 (ENPYRKSDKD…AKQPRKHPQP (62 aa)). Basic and acidic residues predominate over residues 267 to 277 (PYRKSDKDTPK).

This sequence belongs to the CWF19 family.

The protein is CWF19-like protein 1 (cwf19l1) of Xenopus laevis (African clawed frog).